The sequence spans 622 residues: E3 ubiquitin-protein ligase RNF12-A (622 aa).

3 disordered regions span residues 1–26, 67–386, and 473–514; these read MESADSTGKGSIEQSESQRQSQMDRL, RLQQ…ESER, and NANA…NSRG. Over residues 11 to 21 the composition is skewed to low complexity; it reads SIEQSESQRQS. 2 stretches are compositionally biased toward polar residues: residues 110–138 and 147–163; these read SVRQTGNTTRSGQRGNQSWRAVSRTNPNS and INVNRTSGNPSMPSLDQ. A compositionally biased stretch (basic and acidic residues) spans 216–242; it reads RSPDQRRTRARTDRSRSPLHHAVDPPI. A compositionally biased stretch (polar residues) spans 247–256; sequence HSSSQTVDTS. The span at 272-289 shows a compositional bias: low complexity; it reads SSQVQNSSSSNETEGSSR. Polar residues predominate over residues 300 to 317; sequence VLGTEGQSQSTVHLSNPE. The span at 318–331 shows a compositional bias: low complexity; the sequence is TRSSSQTPQTDSST. The span at 332-341 shows a compositional bias: polar residues; it reads NAETTGTGQR. The span at 355–365 shows a compositional bias: basic and acidic residues; sequence RPGDYRQRDSI. Residues 366–382 are compositionally biased toward polar residues; the sequence is ANRTRSRSQTPNNTVTY. The RING-type; atypical zinc-finger motif lies at 568–609; the sequence is CSVCITEYTEGNKLRKLPCSHEYHIHCIDRWLSENSTCPICR. The PDZ-binding motif lies at 619-622; that stretch reads ESIV.

It belongs to the RNF12 family. In terms of assembly, forms homodimers through the C-terminal region. The N-terminus interacts with the homeobox of LIM/homeobox factor lhx1/lim1, with lhx3/lim3 and lhx5/lim5, and with the N-terminus of ldb1. In terms of tissue distribution, shows overlapping expression with lhx1/lim1 and ldb1 in the gastrula mesoderm, and expression overlaps with ldb1 throughout early embryogenesis. After gastrulation, expression is gradually restricted to tissues originated from the ectoderm, the neuroectoderm, neural crest and epidermis, and subsequently to the neural tube as well as the head and tailbud region.

The protein localises to the nucleus. It catalyses the reaction S-ubiquitinyl-[E2 ubiquitin-conjugating enzyme]-L-cysteine + [acceptor protein]-L-lysine = [E2 ubiquitin-conjugating enzyme]-L-cysteine + N(6)-ubiquitinyl-[acceptor protein]-L-lysine.. It participates in protein modification; protein ubiquitination. Acts as an E3 ubiquitin-protein ligase specific for ldb1, mediating ubiquitination and proteasome-dependent degradation of excess ldb1 in a RING-dependent manner. Does not degrade ldb1 bound to lhx1/lim1, nor lim1 itself and thus contributes to the establishment of proper ldb1-lhx1/lim1 stoichiometry and the formation of a ldb1-lhx1/lim1 complex. Interferes with Spemann organizer function and suppresses secondary axis formation induced by ldb1 and lhx1/lim1. The protein is E3 ubiquitin-protein ligase RNF12-A (rnf12-a) of Xenopus laevis (African clawed frog).